A 245-amino-acid polypeptide reads, in one-letter code: Cypemycin N-terminal methyltransferase (245 aa).

The protein belongs to the methyltransferase superfamily.

It carries out the reaction N-terminal L-alanyl-[cypemycin] + 2 S-adenosyl-L-methionine = N-terminal N,N-dimethyl-L-alanyl-[cypemycin] + 2 S-adenosyl-L-homocysteine + 3 H(+). Its function is as follows. Involved in the biosynthesis of the lanaridin cypemycin. The enzyme can methylate a variety of oligopeptides, cyclic peptides and the epsilon-amino group of lysine. The polypeptide is Cypemycin N-terminal methyltransferase (Streptomyces sp).